The chain runs to 59 residues: MELLRAKRMAEAGEIVPVMYKGKQVVIQHVDDEREMARVYFTDEPEHEQDVPVRLLEEQ.

It belongs to the SspH family.

It is found in the spore core. This Geobacillus kaustophilus (strain HTA426) protein is Small, acid-soluble spore protein H 2.